The following is a 303-amino-acid chain: UDP-3-O-acyl-N-acetylglucosamine deacetylase (303 aa).

Histidine 78, histidine 237, and aspartate 241 together coordinate Zn(2+). Histidine 264 acts as the Proton donor in catalysis.

The protein belongs to the LpxC family. Zn(2+) is required as a cofactor.

The catalysed reaction is a UDP-3-O-[(3R)-3-hydroxyacyl]-N-acetyl-alpha-D-glucosamine + H2O = a UDP-3-O-[(3R)-3-hydroxyacyl]-alpha-D-glucosamine + acetate. Its pathway is glycolipid biosynthesis; lipid IV(A) biosynthesis; lipid IV(A) from (3R)-3-hydroxytetradecanoyl-[acyl-carrier-protein] and UDP-N-acetyl-alpha-D-glucosamine: step 2/6. Functionally, catalyzes the hydrolysis of UDP-3-O-myristoyl-N-acetylglucosamine to form UDP-3-O-myristoylglucosamine and acetate, the committed step in lipid A biosynthesis. In Pseudomonas savastanoi pv. phaseolicola (strain 1448A / Race 6) (Pseudomonas syringae pv. phaseolicola (strain 1448A / Race 6)), this protein is UDP-3-O-acyl-N-acetylglucosamine deacetylase.